A 394-amino-acid chain; its full sequence is Quinolinate synthase (394 aa).

His57 and Ser74 together coordinate iminosuccinate. Residue Cys121 participates in [4Fe-4S] cluster binding. Residues 153–155 and Ser174 contribute to the iminosuccinate site; that span reads YMN. Cys243 contacts [4Fe-4S] cluster. Residues 269–271 and Thr286 contribute to the iminosuccinate site; that span reads HPE. A [4Fe-4S] cluster-binding site is contributed by Cys333.

The protein belongs to the quinolinate synthase family. Type 3 subfamily. It depends on [4Fe-4S] cluster as a cofactor.

It localises to the cytoplasm. The enzyme catalyses iminosuccinate + dihydroxyacetone phosphate = quinolinate + phosphate + 2 H2O + H(+). Its pathway is cofactor biosynthesis; NAD(+) biosynthesis; quinolinate from iminoaspartate: step 1/1. Its function is as follows. Catalyzes the condensation of iminoaspartate with dihydroxyacetone phosphate to form quinolinate. The polypeptide is Quinolinate synthase (Corynebacterium glutamicum (strain ATCC 13032 / DSM 20300 / JCM 1318 / BCRC 11384 / CCUG 27702 / LMG 3730 / NBRC 12168 / NCIMB 10025 / NRRL B-2784 / 534)).